The following is a 462-amino-acid chain: Aquaporin-1 (462 aa).

The segment covering 1 to 11 (MTMRSPLTNDH) has biased composition (polar residues). Residues 1 to 24 (MTMRSPLTNDHPQPLRASPLSEHD) form a disordered region. Residues 1 to 146 (MTMRSPLTND…KWMNSDWKNH (146 aa)) lie on the Cytoplasmic side of the membrane. The chain crosses the membrane as a helical span at residues 147-167 (IVAVIGELIGTSLFLFFGYAG). The Extracellular portion of the chain corresponds to 168-182 (IEVAKLQGREPPDLE). The helical transmembrane segment at 183 to 203 (VLFYISATFGASLMVTAWIFF) threads the bilayer. Over 204–229 (RISGGLFNPAVTLALAILKAVSPIRA) the chain is Cytoplasmic. An NPA 1 motif is present at residues 211–213 (NPA). A helical transmembrane segment spans residues 230-250 (FLLVITQLGASCLAAILVQEI). At 251-269 (FPKQLDVATTLGSGTSMGQ) the chain is on the extracellular side. The helical transmembrane segment at 270 to 290 (GFVIEAITTAALIFTIIMLAV) threads the bilayer. The Cytoplasmic segment spans residues 291–296 (EKHKAT). Residues 297–317 (FVAPIGIGLALFVAHMVAVPF) traverse the membrane as a helical segment. The Extracellular segment spans residues 318–341 (TGASLNPARSFGPSAIVWNFPREH). Positions 323-325 (NPA) match the NPA 2 motif. Residues 342–362 (WIYWVGPILGAGLAVLFFRLI) form a helical membrane-spanning segment. Over 363–462 (KLMEYEMANP…WRRQQYRNVV (100 aa)) the chain is Cytoplasmic. Residues 407–433 (GKSWYRDDSSSGSMRRKESVNSFTGGR) are disordered. Basic and acidic residues predominate over residues 410–425 (WYRDDSSSGSMRRKES).

The protein belongs to the MIP/aquaporin (TC 1.A.8) family.

It localises to the membrane. It carries out the reaction H2O(in) = H2O(out). Its function is as follows. Water channel required to facilitate the transport of water across membranes. Involved in conidiation. The polypeptide is Aquaporin-1 (Botryotinia fuckeliana (strain B05.10) (Noble rot fungus)).